A 511-amino-acid polypeptide reads, in one-letter code: Activin receptor type-2B (511 aa).

A signal peptide spans 1-20 (MGASVALTFLLLLATFRAGS). Residues 21 to 136 (GHDEVETREC…KPQPSASVLN (116 aa)) are Extracellular-facing. An intrachain disulfide couples C30 to C61. N-linked (GlcNAc...) asparagine glycans are attached at residues N43 and N67. 3 cysteine pairs are disulfide-bonded: C86–C105, C92–C104, and C106–C111. Residues 137–157 (ILIYSLLPIVGLSMAILLAFW) form a helical membrane-spanning segment. Topologically, residues 158–511 (MYRHRKPSYG…VDLPPKESSI (354 aa)) are cytoplasmic. The region spanning 189-477 (LQLLDIKARG…LSAGCVEERI (289 aa)) is the Protein kinase domain. ATP contacts are provided by residues 195–203 (KARGRFGCV) and K216. D320 functions as the Proton acceptor in the catalytic mechanism.

It belongs to the protein kinase superfamily. TKL Ser/Thr protein kinase family. TGFB receptor subfamily.

The protein localises to the membrane. It carries out the reaction L-threonyl-[receptor-protein] + ATP = O-phospho-L-threonyl-[receptor-protein] + ADP + H(+). The enzyme catalyses L-seryl-[receptor-protein] + ATP = O-phospho-L-seryl-[receptor-protein] + ADP + H(+). Functionally, receptor for activin A, activin B and inhibin A. Involved in transmembrane signaling. The chain is Activin receptor type-2B (acvr2b) from Xenopus laevis (African clawed frog).